Reading from the N-terminus, the 175-residue chain is MESIILSIAIFIGVLLGTSVGAGSGSSISPDVDAGSGSRTSPDVDAGSGSRISAGVGTFSGSSTSPDVDAGSGSSTSPDVGAGSGSSISAGVGSRIGTGIGSRIGTGIGTGIGSRISTSIGSRISPDVGTSSGNRISTGVSTGISTTMNARVAVLITAAILSAPVTAIALLEARR.

At Met1–Glu2 the chain is on the extracellular side. A helical membrane pass occupies residues Ser3–Gly23. Over Ser24–Arg151 the chain is Cytoplasmic. Residues Ser26 to Ile88 are disordered. Positions Phe59 to Pro78 are enriched in polar residues. Residues Val152 to Glu172 traverse the membrane as a helical segment. Residues Ala173–Arg175 are Extracellular-facing.

The protein resides in the membrane. This is an uncharacterized protein from Saccharomyces cerevisiae (strain ATCC 204508 / S288c) (Baker's yeast).